The primary structure comprises 120 residues: Large ribosomal subunit protein uL18 (120 aa).

Residues 1 to 26 form a disordered region; the sequence is MKLTRRESKQRRHRRVRGKVQGSPER. A compositionally biased stretch (basic residues) spans 8 to 18; it reads SKQRRHRRVRG.

It belongs to the universal ribosomal protein uL18 family. In terms of assembly, part of the 50S ribosomal subunit; part of the 5S rRNA/L5/L18/L25 subcomplex. Contacts the 5S and 23S rRNAs.

In terms of biological role, this is one of the proteins that bind and probably mediate the attachment of the 5S RNA into the large ribosomal subunit, where it forms part of the central protuberance. This Trichormus variabilis (strain ATCC 29413 / PCC 7937) (Anabaena variabilis) protein is Large ribosomal subunit protein uL18.